Here is a 480-residue protein sequence, read N- to C-terminus: Proline--tRNA ligase (480 aa).

The protein belongs to the class-II aminoacyl-tRNA synthetase family. ProS type 3 subfamily. As to quaternary structure, homodimer.

The protein resides in the cytoplasm. It catalyses the reaction tRNA(Pro) + L-proline + ATP = L-prolyl-tRNA(Pro) + AMP + diphosphate. Its function is as follows. Catalyzes the attachment of proline to tRNA(Pro) in a two-step reaction: proline is first activated by ATP to form Pro-AMP and then transferred to the acceptor end of tRNA(Pro). The chain is Proline--tRNA ligase from Mycobacterium leprae (strain Br4923).